We begin with the raw amino-acid sequence, 308 residues long: MQIYPLRLLPNKIDFDFMNFKKVSYTFSIILSLISFIWIGIYKFNFGIDFAGGIVIEVRLDQAPDLPKMRGVLGKLGIGEVVLQNFGSERDLSIRFGSSSEENLMKNIELIKGFLQSNFPYKFEYRKVDFVGPQVGRQLIEAGAMAMLFSFLAIMVYIWVRFEWYFGLGILIALVHDVILALGFMSMTKLDFNLSTIAAVLTIIGYSVNDSVVIYDRIRENLRKYHKKNITEIINLSINETLSRTILTVITTLLANLALILFGGEAIRSFSVLVFFGIIAGTYSSIFISAPILTMFVNRKFNKKVIER.

A run of 6 helical transmembrane segments spans residues 28 to 48 (SIIL…NFGI), 140 to 160 (IEAG…YIWV), 164 to 184 (WYFG…ALGF), 194 to 214 (LSTI…SVVI), 246 to 266 (ILTV…GGEA), and 272 to 292 (VLVF…SAPI).

Belongs to the SecD/SecF family. SecF subfamily. In terms of assembly, forms a complex with SecD. Part of the essential Sec protein translocation apparatus which comprises SecA, SecYEG and auxiliary proteins SecDF-YajC and YidC.

It localises to the cell inner membrane. Part of the Sec protein translocase complex. Interacts with the SecYEG preprotein conducting channel. SecDF uses the proton motive force (PMF) to complete protein translocation after the ATP-dependent function of SecA. The protein is Protein translocase subunit SecF of Rickettsia conorii (strain ATCC VR-613 / Malish 7).